Here is a 554-residue protein sequence, read N- to C-terminus: (Z)-gamma-bisabolene synthase 1 (554 aa).

Residues D306, D310, D450, and D458 each contribute to the Mg(2+) site. A DDXXD motif motif is present at residues 306 to 310; it reads DDACD.

Belongs to the terpene synthase family. Tpsa subfamily. Mg(2+) serves as cofactor. Requires Mn(2+) as cofactor. Predominantly expressed in roots. Expressed in the cortex and the sub-epidermal layers of roots. Also detected in leaf hydathodes and flower stigmata.

The protein resides in the cytoplasm. The enzyme catalyses (2E,6E)-farnesyl diphosphate = (Z)-gamma-bisabolene + diphosphate. Its pathway is secondary metabolite biosynthesis; terpenoid biosynthesis. Its function is as follows. Involved in sesquiterpene (C15) biosynthesis. The major product is (Z)-gamma-bisabolene with minor amounts of (E)-nerolidol and alpha-bisabolol. The protein is (Z)-gamma-bisabolene synthase 1 (TPS12) of Arabidopsis thaliana (Mouse-ear cress).